The chain runs to 468 residues: ATP synthase subunit beta (468 aa).

155 to 162 is a binding site for ATP; the sequence is GGAGVGKT.

This sequence belongs to the ATPase alpha/beta chains family. F-type ATPases have 2 components, CF(1) - the catalytic core - and CF(0) - the membrane proton channel. CF(1) has five subunits: alpha(3), beta(3), gamma(1), delta(1), epsilon(1). CF(0) has three main subunits: a(1), b(2) and c(9-12). The alpha and beta chains form an alternating ring which encloses part of the gamma chain. CF(1) is attached to CF(0) by a central stalk formed by the gamma and epsilon chains, while a peripheral stalk is formed by the delta and b chains.

The protein localises to the cell membrane. It carries out the reaction ATP + H2O + 4 H(+)(in) = ADP + phosphate + 5 H(+)(out). Produces ATP from ADP in the presence of a proton gradient across the membrane. The catalytic sites are hosted primarily by the beta subunits. The chain is ATP synthase subunit beta from Streptococcus equi subsp. zooepidemicus (strain H70).